The sequence spans 94 residues: Small ribosomal subunit protein uS19 (94 aa).

The protein belongs to the universal ribosomal protein uS19 family.

Protein S19 forms a complex with S13 that binds strongly to the 16S ribosomal RNA. This Clostridium botulinum (strain Langeland / NCTC 10281 / Type F) protein is Small ribosomal subunit protein uS19.